Here is a 494-residue protein sequence, read N- to C-terminus: tRNA (guanine(37)-N(1))-methyltransferase (494 aa).

The N-terminal 32 residues, 1 to 32 (MRIRRILYFYGNLPNTYTANVLRRLAFSCWHT), are a transit peptide targeting the mitochondrion. Residues histidine 278, 316–317 (DL), 344–345 (DG), and asparagine 377 each bind S-adenosyl-L-methionine. A disordered region spans residues 468–494 (DTGEPESKRPRTAEAFPLPHVQQSRNS).

It belongs to the class I-like SAM-binding methyltransferase superfamily. TRM5/TYW2 family. Monomer.

The protein localises to the mitochondrion matrix. The protein resides in the nucleus. It is found in the cytoplasm. It catalyses the reaction guanosine(37) in tRNA + S-adenosyl-L-methionine = N(1)-methylguanosine(37) in tRNA + S-adenosyl-L-homocysteine + H(+). Functionally, involved in mitochondrial tRNA methylation. Specifically methylates the N1 position of guanosine-37 in various tRNAs. Methylation is not dependent on the nature of the nucleoside 5' of the target nucleoside. This is the first step in the biosynthesis of wybutosine (yW), a modified base adjacent to the anticodon of tRNAs and required for accurate decoding. The protein is tRNA (guanine(37)-N(1))-methyltransferase (trmt5) of Xenopus tropicalis (Western clawed frog).